The sequence spans 92 residues: MPRSLKKGPFIDLHLLKKVEKAVESGDKKPLRTWSRRSTIFPNMIGLTIAVHNGRQHVPVFVTDEMVGHKLGEFAPTRTYRGHAADKKAKKK.

It belongs to the universal ribosomal protein uS19 family.

Functionally, protein S19 forms a complex with S13 that binds strongly to the 16S ribosomal RNA. This chain is Small ribosomal subunit protein uS19, found in Shigella boydii serotype 18 (strain CDC 3083-94 / BS512).